A 791-amino-acid chain; its full sequence is Phenylalanine--tRNA ligase beta subunit (791 aa).

The region spanning 39-149 is the tRNA-binding domain; sequence GDEIQNVVTG…SDTAIGKDIK (111 aa). The B5 domain occupies 403-478; that stretch reads IKERNLKVDS…RIYGYNNIPT (76 aa). Aspartate 456, aspartate 462, glutamate 465, and glutamate 466 together coordinate Mg(2+). Residues 698–791 enclose the FDX-ACB domain; that stretch reads PKFPAVDRDM…LENNLGAELR (94 aa).

The protein belongs to the phenylalanyl-tRNA synthetase beta subunit family. Type 1 subfamily. In terms of assembly, tetramer of two alpha and two beta subunits. Requires Mg(2+) as cofactor.

It localises to the cytoplasm. It catalyses the reaction tRNA(Phe) + L-phenylalanine + ATP = L-phenylalanyl-tRNA(Phe) + AMP + diphosphate + H(+). The sequence is that of Phenylalanine--tRNA ligase beta subunit from Clostridium tetani (strain Massachusetts / E88).